The sequence spans 177 residues: Large ribosomal subunit protein uL6 (177 aa).

The protein belongs to the universal ribosomal protein uL6 family. As to quaternary structure, part of the 50S ribosomal subunit.

This protein binds to the 23S rRNA, and is important in its secondary structure. It is located near the subunit interface in the base of the L7/L12 stalk, and near the tRNA binding site of the peptidyltransferase center. In Rickettsia massiliae (strain Mtu5), this protein is Large ribosomal subunit protein uL6.